Here is a 31-residue protein sequence, read N- to C-terminus: Phalloidin proprotein (31 aa).

Positions 1 to 10 are excised as a propeptide; that stretch reads MSDINATRLP. Residues 11 to 17 constitute a cross-link (cyclopeptide (Ala-Pro)); it reads AWLATCP. A cross-link (2'-cysteinyl-6'-hydroxytryptophan sulfoxide (Trp-Cys)) is located at residues 12 to 16; the sequence is WLATC. Residues 18–31 constitute a propeptide that is removed on maturation; that stretch reads CAGDDVNPLLTRGE.

It belongs to the MSDIN fungal toxin family. In terms of processing, processed by the macrocyclase-peptidase enzyme POPB to yield a toxic cyclic heptapeptide. POPB first removes 10 residues from the N-terminus. Conformational trapping of the remaining peptide forces the enzyme to release this intermediate rather than proceed to macrocyclization. The enzyme rebinds the remaining peptide in a different conformation and catalyzes macrocyclization of the N-terminal 7 residues.

Major toxin that belongs to the bicyclic heptapeptides called phallotoxins. Although structurally related to amatoxins, phallotoxins have a different mode of action, which is the stabilization of F-actin. Phallotoxins are poisonous when administered parenterally, but not orally because of poor absorption. The protein is Phalloidin proprotein of Amanita ocreata (Western North American destroying angel).